The sequence spans 457 residues: Equilibrative nucleoside transporter 1 (457 aa).

Residues 1 to 12 (MTTSHQPQDRYK) lie on the Cytoplasmic side of the membrane. A helical transmembrane segment spans residues 13-29 (AVWLIFFVLGLGTLLPW). Residues 30-82 (NFFITATQYFTSRLNTSQNISLVTNQSCESTEALADPSVSLPARSSLSAIFNN) lie on the Extracellular side of the membrane. N44, N48, and N54 each carry an N-linked (GlcNAc...) asparagine glycan. A helical transmembrane segment spans residues 83–107 (VMTLCAMLPLLIFTCLNSFLHQKVS). The Cytoplasmic segment spans residues 108–111 (QSLR). The helical transmembrane segment at 112-130 (ILGSLLAILLVFLVTATLV) threads the bilayer. Residues 131–138 (KVQMDALS) are Extracellular-facing. The helical transmembrane segment at 139-157 (FFIITMIKIVLINSFGAIL) threads the bilayer. The Cytoplasmic segment spans residues 158-174 (QASLFGLAGVLPANYTA). The chain crosses the membrane as a helical span at residues 175–199 (PIMSGQGLAGFFTSVAMICAVASGS). The Extracellular segment spans residues 200–206 (KLSESAF). The helical transmembrane segment at 207 to 227 (GYFITACAVVILAILCYLALP) threads the bilayer. The Cytoplasmic portion of the chain corresponds to 228-291 (WMEFYRHYLQ…IKAILKSIWV (64 aa)). S254 carries the post-translational modification Phosphoserine. Positions 255–266 (EGEEPRGGREES) are enriched in basic and acidic residues. The segment at 255 to 275 (EGEEPRGGREESGVPGPNSLP) is disordered. At S273 the chain carries Phosphoserine. Residues 292-311 (LALSVCFIFTVTIGLFPAVT) traverse the membrane as a helical segment. Residues 312-323 (AEVESSIAGTSP) lie on the Extracellular side of the membrane. A helical transmembrane segment spans residues 324–343 (WKNCYFIPVACFLNFNVFDW). The Cytoplasmic segment spans residues 344–360 (LGRSLTAICMWPGQDSR). A helical transmembrane segment spans residues 361–379 (WLPVLVACRVVFIPLLMLC). The Extracellular portion of the chain corresponds to 380–394 (NVKQHHYLPSLFKHD). The chain crosses the membrane as a helical span at residues 395–414 (VWFITFMAAFAFSNGYLASL). At 415–432 (CMCFGPKKVKPAEAETAG) the chain is on the cytoplasmic side. The chain crosses the membrane as a helical span at residues 433-453 (NIMSFFLCLGLALGAVLSFLL). Residues 454 to 457 (RALV) lie on the Extracellular side of the membrane.

This sequence belongs to the SLC29A/ENT transporter (TC 2.A.57) family. As to quaternary structure, identified in a complex with STOM. As to expression, expressed in jejunum, liver and lung. Expressed in testis at the blood-testis barrier (at protein level). Expressed in ventricular myocytes (at protein level). Expressed in kidney.

The protein resides in the basolateral cell membrane. Its subcellular location is the apical cell membrane. The protein localises to the cell membrane. It catalyses the reaction adenosine(in) = adenosine(out). The catalysed reaction is guanosine(in) = guanosine(out). It carries out the reaction inosine(in) = inosine(out). The enzyme catalyses uridine(out) = uridine(in). It catalyses the reaction thymidine(in) = thymidine(out). The catalysed reaction is cytidine(in) = cytidine(out). It carries out the reaction adenine(out) = adenine(in). The enzyme catalyses guanine(out) = guanine(in). It catalyses the reaction thymine(out) = thymine(in). The catalysed reaction is uracil(in) = uracil(out). It carries out the reaction hypoxanthine(out) = hypoxanthine(in). With respect to regulation, transport activity is sensitive to low concentrations of the inhibitor nitrobenzylmercaptopurine riboside (NBMPR). Uniporter involved in the facilitative transport of nucleosides and nucleobases, and contributes to maintaining their cellular homeostasis. Functions as a Na(+)-independent transporter. Involved in the transport of nucleosides such as adenosine, thymidine and uridine. Also transports purine nucleobases (hypoxanthine, adenine, guanine) and pyrimidine nucleobases (thymine, uracil). Mediates basolateral nucleoside uptake into Sertoli cells, thereby regulating the transport of nucleosides in testis across the blood-testis barrier. Regulates inosine levels in brown adipocytes tissues (BAT) and extracellular inosine levels, which controls BAT-dependent energy expenditure. In Rattus norvegicus (Rat), this protein is Equilibrative nucleoside transporter 1.